Here is a 515-residue protein sequence, read N- to C-terminus: Maturase K (515 aa).

The protein belongs to the intron maturase 2 family. MatK subfamily.

The protein resides in the plastid. The protein localises to the chloroplast. Functionally, usually encoded in the trnK tRNA gene intron. Probably assists in splicing its own and other chloroplast group II introns. The sequence is that of Maturase K from Helonias bullata (Swamp pink).